The following is a 241-amino-acid chain: Carboxy-S-adenosyl-L-methionine synthase (241 aa).

Residues Y38, 63 to 65, 88 to 89, 116 to 117, N131, and R198 each bind S-adenosyl-L-methionine; these read GCS, DN, and DI.

This sequence belongs to the class I-like SAM-binding methyltransferase superfamily. Cx-SAM synthase family. As to quaternary structure, homodimer.

The enzyme catalyses prephenate + S-adenosyl-L-methionine = carboxy-S-adenosyl-L-methionine + 3-phenylpyruvate + H2O. Catalyzes the conversion of S-adenosyl-L-methionine (SAM) to carboxy-S-adenosyl-L-methionine (Cx-SAM). The polypeptide is Carboxy-S-adenosyl-L-methionine synthase (Actinobacillus pleuropneumoniae serotype 7 (strain AP76)).